The following is a 111-amino-acid chain: PHD finger-like domain-containing protein 5A (111 aa).

This sequence belongs to the PHF5 family.

The sequence is that of PHD finger-like domain-containing protein 5A from Drosophila melanogaster (Fruit fly).